An 803-amino-acid chain; its full sequence is DNA polymerase 2 (803 aa).

The protein belongs to the DNA polymerase type-B family.

The enzyme catalyses DNA(n) + a 2'-deoxyribonucleoside 5'-triphosphate = DNA(n+1) + diphosphate. The polypeptide is DNA polymerase 2 (polB) (Aeropyrum pernix (strain ATCC 700893 / DSM 11879 / JCM 9820 / NBRC 100138 / K1)).